Reading from the N-terminus, the 258-residue chain is 5'-nucleotidase SurE (258 aa).

The a divalent metal cation site is built by D9, D10, S42, and N96.

The protein belongs to the SurE nucleotidase family. Requires a divalent metal cation as cofactor.

It localises to the cytoplasm. The enzyme catalyses a ribonucleoside 5'-phosphate + H2O = a ribonucleoside + phosphate. Nucleotidase that shows phosphatase activity on nucleoside 5'-monophosphates. This is 5'-nucleotidase SurE from Campylobacter jejuni subsp. jejuni serotype O:23/36 (strain 81-176).